We begin with the raw amino-acid sequence, 341 residues long: Protein-glutamate methylesterase/protein-glutamine glutaminase 2 (341 aa).

The Response regulatory domain occupies 7 to 120; sequence KTLIVDDSLL…NRDLDSFFSE (114 aa). A 4-aspartylphosphate modification is found at Asp-58. In terms of domain architecture, CheB-type methylesterase spans 155–341; the sequence is VIAIGASTGG…QALYKLINQL (187 aa). Active-site residues include Ser-161, His-187, and Asp-283.

It belongs to the CheB family. Phosphorylated by CheA. Phosphorylation of the N-terminal regulatory domain activates the methylesterase activity.

The protein resides in the cytoplasm. The catalysed reaction is [protein]-L-glutamate 5-O-methyl ester + H2O = L-glutamyl-[protein] + methanol + H(+). It catalyses the reaction L-glutaminyl-[protein] + H2O = L-glutamyl-[protein] + NH4(+). Its function is as follows. Involved in chemotaxis. Part of a chemotaxis signal transduction system that modulates chemotaxis in response to various stimuli. Catalyzes the demethylation of specific methylglutamate residues introduced into the chemoreceptors (methyl-accepting chemotaxis proteins or MCP) by CheR. Also mediates the irreversible deamidation of specific glutamine residues to glutamic acid. The protein is Protein-glutamate methylesterase/protein-glutamine glutaminase 2 of Syntrophomonas wolfei subsp. wolfei (strain DSM 2245B / Goettingen).